A 502-amino-acid polypeptide reads, in one-letter code: Protein YdgA (502 aa).

Positions 1 to 19 (MNKSLVAVGVIVALGVVWT) are cleaved as a signal peptide.

This sequence to E.coli YihF and H.influenzae HI_1236. Homodimer.

The protein resides in the cell inner membrane. In Escherichia coli (strain K12), this protein is Protein YdgA (ydgA).